The primary structure comprises 1159 residues: WASH complex subunit 5 (1159 aa).

This sequence belongs to the strumpellin family. Component of the WASH complex.

It is found in the early endosome. In terms of biological role, acts at least in part as component of the WASH complex which seems to regulate washc1 nucleation-promoting factor (NPF) activity and is required for its membrane targeting during endosomal sorting. This is WASH complex subunit 5 from Xenopus tropicalis (Western clawed frog).